A 317-amino-acid polypeptide reads, in one-letter code: MNNNKVIKKVTVVGAGFVGSTTAYTLMLSGLISEIVLIDINAKKADGEVMDLNHGMPFVRPVEIYRGDYKDCAGSDIVIITAGANQKEGETRIDLVKRNTEVFKNIINEIVKYNNDCILLVVTNPVDILTYVTYKLSGFPKNKVIGSGTVLDTARFRYLLSEHVKVDARNVHAYIIGEHGDTEVAAWSLANIAGIPMDRYCDECHQCEEQISRNKIYESVKNAAYEIIRNKGATYYAVALAVRRIVEAIVRNENSILTVSSLLEGQYGLSDVCLSVPTIVGVNGIEEILNVPFNDEEIQLLRKSGNTLKEIIKTLDI.

NAD(+)-binding positions include valine 18, aspartate 39, lysine 44, tyrosine 69, and 83 to 84; that span reads GA. Residues glutamine 86, arginine 92, and 124-127 contribute to the substrate site; that span reads NPVD. NAD(+) is bound by residues 122–124 and serine 147; that span reads VTN. 152–155 contacts substrate; it reads DTAR. 2 residues coordinate beta-D-fructose 1,6-bisphosphate: arginine 157 and histidine 172. Histidine 179 functions as the Proton acceptor in the catalytic mechanism. Tyrosine 225 is subject to Phosphotyrosine. Threonine 234 lines the substrate pocket.

The protein belongs to the LDH/MDH superfamily. LDH family. In terms of assembly, homotetramer.

The protein localises to the cytoplasm. It catalyses the reaction (S)-lactate + NAD(+) = pyruvate + NADH + H(+). Its pathway is fermentation; pyruvate fermentation to lactate; (S)-lactate from pyruvate: step 1/1. With respect to regulation, allosterically activated by fructose 1,6-bisphosphate (FBP). In terms of biological role, catalyzes the conversion of lactate to pyruvate. This is L-lactate dehydrogenase from Acetivibrio thermocellus (strain ATCC 27405 / DSM 1237 / JCM 9322 / NBRC 103400 / NCIMB 10682 / NRRL B-4536 / VPI 7372) (Clostridium thermocellum).